The following is a 361-amino-acid chain: NAD(P)H-quinone oxidoreductase subunit 1, chloroplastic (361 aa).

A run of 7 helical transmembrane segments spans residues 28–48 (IWVLIPILTLVLGITLGVLVI), 99–119 (FTIGPSIAVISILLSYSVIPF), 128–148 (LSIGVFLWIAVSSLAPIGLLM), 249–269 (YSGIKFGLFYVASYLNLLVSS), 270–290 (LFVTVLYLGGWNLSIPYLFVP), 301–321 (TIICIFITLAKTYLFLFISIA), and 341–361 (FLLPISLGNLLLTTSFQLLSL).

The protein belongs to the complex I subunit 1 family. NDH is composed of at least 16 different subunits, 5 of which are encoded in the nucleus.

The protein resides in the plastid. Its subcellular location is the chloroplast thylakoid membrane. It carries out the reaction a plastoquinone + NADH + (n+1) H(+)(in) = a plastoquinol + NAD(+) + n H(+)(out). It catalyses the reaction a plastoquinone + NADPH + (n+1) H(+)(in) = a plastoquinol + NADP(+) + n H(+)(out). Its function is as follows. NDH shuttles electrons from NAD(P)H:plastoquinone, via FMN and iron-sulfur (Fe-S) centers, to quinones in the photosynthetic chain and possibly in a chloroplast respiratory chain. The immediate electron acceptor for the enzyme in this species is believed to be plastoquinone. Couples the redox reaction to proton translocation, and thus conserves the redox energy in a proton gradient. This Jasminum nudiflorum (Winter jasmine) protein is NAD(P)H-quinone oxidoreductase subunit 1, chloroplastic.